Here is a 244-residue protein sequence, read N- to C-terminus: Phosphoadenosine 5'-phosphosulfate reductase (244 aa).

Cys-239 (nucleophile; cysteine thiosulfonate intermediate) is an active-site residue.

It belongs to the PAPS reductase family. CysH subfamily.

It localises to the cytoplasm. It carries out the reaction [thioredoxin]-disulfide + sulfite + adenosine 3',5'-bisphosphate + 2 H(+) = [thioredoxin]-dithiol + 3'-phosphoadenylyl sulfate. The protein operates within sulfur metabolism; hydrogen sulfide biosynthesis; sulfite from sulfate: step 3/3. Its function is as follows. Catalyzes the formation of sulfite from phosphoadenosine 5'-phosphosulfate (PAPS) using thioredoxin as an electron donor. In Buchnera aphidicola subsp. Acyrthosiphon pisum (strain Tuc7), this protein is Phosphoadenosine 5'-phosphosulfate reductase.